A 218-amino-acid chain; its full sequence is 25 kDa calcium-binding protein (218 aa).

4 EF-hand domains span residues 24–59, 66–101, 128–163, and 171–206; these read GAKTVARRIFENYDKGRKGRIENTDCVPMITEAYKS, PSSDDIKAYHRVLDRNGDGIVTYQDIEELCIRYLTG, AKLDVARRLFKRYDKDGSGQLQDDEIAGLLKDTYAE, and PTKEDVKIWLQMADTNSDGSVSLEEYEDLIIKSLQK. Ca(2+) contacts are provided by D37, R43, D48, D79, N81, D83, D90, D141, D143, S145, Q147, E152, D184, N186, D188, S190, and E195.

In terms of biological role, expected to play a crucial role in calcium-dependent regulation of ciliary movement. The sequence is that of 25 kDa calcium-binding protein from Tetrahymena thermophila.